Here is a 924-residue protein sequence, read N- to C-terminus: MEDTPERTPSSESIQPPGLAREPEVTSPGDSEGCARPLDPAPKKLCGYLSKFGGKGPIKGWKCRWFFYDERKCHLYYSRTAQDANPLDSIDLSSATFDCKADAEEEGTFEIKTPSRVITLKAATRQVMLYWLQQLQMKRWEFHNSPPALPATPAAALTENGPTLHLKLEQEEAELEEFLCPVKTPPGLVGTAAALQPVPAMPSALQNISLKHLGTEIQNTMYNIRGNKQAQATAHGPPVEESSQSAEPQRGEQPLISDPSIPEKEPEDPPKSAPRSCVPSGPMQKPKRQSNTFPFFSDGLARSRTAQEKVVALEQQVLMLTKELKSQKELVIILHKALEAAQQEKRASSAYLAATEDRDRLELVRHKVRQIAELNQRVEALEQDRERLVHEAGLREQQVQALQQHVQLLMDKNQAKQQVICKLSQKLTEDLAQPQPADATNGDFLSQQERLEHLKDDMEAYRTQNRFLNSEIHQVTKIWRKVAEKEKALLTKCAYLQARNCQVESKYLAGLRRLQEAAGAEPGDFPELLQQLVQEALQWEAGEASDSVGLSPVSEYDDYGFLTVPDYEVEDLKLLAKIQALEVRSHHLLALEAVERPLRDRWATLTELMPSAELKQLLRAGVPREHRPRVWRWLVHRRVQHLHSSGCYQELLARGRACEHPAARQIELDLNRTFPTNKHFTCPTSSFPDKLRRVLLAFSWQNPTIGYCQGLNRLAAIALLVLEDEESAFWCLVAIVETILPAEYYSKTLTASQVDQRVLQDLLSEKLPRLTAHLGQRHVDLSLITFNWFLVIFADSLISDILLRVWDAFLYEGTKVVFRYALAIFKYNEEAILRLQDSLEIYQYLRFFTKTICDSRKLTSIAFNDMNPFPMKQLRQLRAAHRERLEAELRELELLKAEYLERRASRGRAVPEGCVSEDEGEGDS.

The tract at residues 1–38 is disordered; sequence MEDTPERTPSSESIQPPGLAREPEVTSPGDSEGCARPL. An interaction with CADH1 region spans residues 1–167; that stretch reads MEDTPERTPS…TENGPTLHLK (167 aa). Residues 42 to 140 form the PH domain; the sequence is PKKLCGYLSK…WLQQLQMKRW (99 aa). Residues 228-296 form a disordered region; sequence KQAQATAHGP…KRQSNTFPFF (69 aa). Over residues 261-270 the composition is skewed to basic and acidic residues; sequence IPEKEPEDPP. Residues 297 to 435 are interaction with RAC1; it reads SDGLARSRTA…KLTEDLAQPQ (139 aa). 3 coiled-coil regions span residues 303–332, 361–418, and 444–477; these read SRTA…ELVI, LELV…AKQQ, and FLSQ…QVTK. Residues 621–813 enclose the Rab-GAP TBC domain; it reads GVPREHRPRV…RVWDAFLYEG (193 aa). Residues 871 to 906 adopt a coiled-coil conformation; that stretch reads MKQLRQLRAAHRERLEAELRELELLKAEYLERRASR. A Phosphoserine modification is found at Ser916.

In terms of assembly, interacts with activated RAC1 and CDH1.

Its subcellular location is the cytoplasm. It is found in the cytoplasmic vesicle. The protein resides in the cell junction. Its function is as follows. Acts as a GTPase-activating protein for RAB7A. Signal effector acting as a linker between RAC1 and RAB7A, leading to RAB7A inactivation and subsequent inhibition of cadherin degradation and reduced cell-cell adhesion. This chain is TBC1 domain family member 2A (Tbc1d2), found in Rattus norvegicus (Rat).